Here is an 888-residue protein sequence, read N- to C-terminus: Alanine--tRNA ligase (888 aa).

Residues His564, His568, Cys676, and His680 each coordinate Zn(2+).

It belongs to the class-II aminoacyl-tRNA synthetase family. Requires Zn(2+) as cofactor.

It localises to the cytoplasm. The catalysed reaction is tRNA(Ala) + L-alanine + ATP = L-alanyl-tRNA(Ala) + AMP + diphosphate. Functionally, catalyzes the attachment of alanine to tRNA(Ala) in a two-step reaction: alanine is first activated by ATP to form Ala-AMP and then transferred to the acceptor end of tRNA(Ala). Also edits incorrectly charged Ser-tRNA(Ala) and Gly-tRNA(Ala) via its editing domain. The chain is Alanine--tRNA ligase from Bartonella quintana (strain Toulouse) (Rochalimaea quintana).